Here is a 286-residue protein sequence, read N- to C-terminus: ATP synthase gamma chain (286 aa).

Belongs to the ATPase gamma chain family. F-type ATPases have 2 components, CF(1) - the catalytic core - and CF(0) - the membrane proton channel. CF(1) has five subunits: alpha(3), beta(3), gamma(1), delta(1), epsilon(1). CF(0) has three main subunits: a, b and c.

The protein resides in the cell inner membrane. Produces ATP from ADP in the presence of a proton gradient across the membrane. The gamma chain is believed to be important in regulating ATPase activity and the flow of protons through the CF(0) complex. This Shewanella halifaxensis (strain HAW-EB4) protein is ATP synthase gamma chain.